A 194-amino-acid chain; its full sequence is Fe/S biogenesis protein NfuA (194 aa).

Positions 152 and 155 each coordinate [4Fe-4S] cluster.

It belongs to the NfuA family. As to quaternary structure, homodimer. Requires [4Fe-4S] cluster as cofactor.

Its function is as follows. Involved in iron-sulfur cluster biogenesis. Binds a 4Fe-4S cluster, can transfer this cluster to apoproteins, and thereby intervenes in the maturation of Fe/S proteins. Could also act as a scaffold/chaperone for damaged Fe/S proteins. The polypeptide is Fe/S biogenesis protein NfuA (Pseudomonas fluorescens (strain SBW25)).